The chain runs to 121 residues: Basic phospholipase A2 homolog piratoxin-1 (121 aa).

Cystine bridges form between Cys-26–Cys-115, Cys-28–Cys-44, Cys-43–Cys-95, Cys-49–Cys-121, Cys-50–Cys-88, Cys-57–Cys-81, and Cys-75–Cys-86. An important for membrane-damaging activities in eukaryotes and bacteria; heparin-binding region spans residues 105-117 (KLYRYHLKPFCKK).

The protein belongs to the phospholipase A2 family. Group II subfamily. K49 sub-subfamily. In terms of assembly, homodimer; non-covalently linked. Expressed by the venom gland.

The protein resides in the secreted. Rosmarinic acid inhibits the myotoxic activity. Bromophenacyl bromide (BPB) inhibits the myotoxic activity through a covalent binding. Caffeic acid and aristolochic acid, two plant compounds used in folk medicine used to treat envenomation, inhibit the myotoxic activity. Functionally, snake venom phospholipase A2 (PLA2) homolog that lacks enzymatic activity. Is myotoxic and displays edema-inducing activities. Induces neuromuscular blockage. A model of myotoxic mechanism has been proposed: an apo Lys49-PLA2 is activated by the entrance of a hydrophobic molecule (e.g. fatty acid) at the hydrophobic channel of the protein leading to a reorientation of a monomer. This reorientation causes a transition between 'inactive' to 'active' states, causing alignment of C-terminal and membrane-docking sites (MDoS) side-by-side and putting the membrane-disruption sites (MDiS) in the same plane, exposed to solvent and in a symmetric position for both monomers. The MDoS region stabilizes the toxin on membrane by the interaction of charged residues with phospholipid head groups. Subsequently, the MDiS region destabilizes the membrane with penetration of hydrophobic residues. This insertion causes a disorganization of the membrane, allowing an uncontrolled influx of ions (i.e. calcium and sodium), and eventually triggering irreversible intracellular alterations and cell death. This Bothrops pirajai (Piraja's lancehead) protein is Basic phospholipase A2 homolog piratoxin-1.